Here is a 633-residue protein sequence, read N- to C-terminus: Molybdenum cofactor biosynthesis protein 1 (633 aa).

The interval 1-380 (MAAQPVSRVV…QMKNRPMILI (380 aa)) is molybdenum cofactor biosynthesis protein A. Serine 61 is modified (phosphoserine). The Radical SAM core domain occupies 61–295 (SFGRHHSYLR…AKAFKIPGFR (235 aa)). Arginine 70 provides a ligand contact to GTP. The [4Fe-4S] cluster site is built by cysteine 77 and cysteine 81. S-adenosyl-L-methionine is bound at residue tyrosine 83. Cysteine 84 is a binding site for [4Fe-4S] cluster. Arginine 120 contacts GTP. Glycine 124 is an S-adenosyl-L-methionine binding site. Position 151 (threonine 151) interacts with GTP. Serine 175 contacts S-adenosyl-L-methionine. Residue lysine 195 is modified to N6-acetyllysine. Lysine 212 serves as a coordination point for GTP. Methionine 246 provides a ligand contact to S-adenosyl-L-methionine. 2 residues coordinate [4Fe-4S] cluster: cysteine 309 and cysteine 312. GTP is bound at residue 314 to 316 (RLR). Cysteine 326 is a [4Fe-4S] cluster binding site. The tract at residues 410–633 (VSFSSQMVTL…GGQRGDFHRT (224 aa)) is molybdenum cofactor biosynthesis protein C. Residues 446–480 (SSHLDSDANPKCLSPTEPQAPAASSGPLPDSDQLT) form a disordered region. Lysine 525 is subject to N6-acetyllysine. Aspartate 603 (for molybdenum cofactor biosynthesis protein C activity) is an active-site residue.

In the C-terminal section; belongs to the MoaC family. This sequence in the N-terminal section; belongs to the radical SAM superfamily. MoaA family. As to quaternary structure, isoform MOCS1A and isoform MOCS1B probably form a heterooligomer. [4Fe-4S] cluster serves as cofactor.

It carries out the reaction GTP + AH2 + S-adenosyl-L-methionine = (8S)-3',8-cyclo-7,8-dihydroguanosine 5'-triphosphate + 5'-deoxyadenosine + L-methionine + A + H(+). It catalyses the reaction (8S)-3',8-cyclo-7,8-dihydroguanosine 5'-triphosphate = cyclic pyranopterin phosphate + diphosphate. The protein operates within cofactor biosynthesis; molybdopterin biosynthesis. In terms of biological role, isoform MOCS1A and isoform MOCS1B probably form a complex that catalyzes the conversion of 5'-GTP to cyclic pyranopterin monophosphate (cPMP). MOCS1A catalyzes the cyclization of GTP to (8S)-3',8-cyclo-7,8-dihydroguanosine 5'-triphosphate and MOCS1B catalyzes the subsequent conversion of (8S)-3',8-cyclo-7,8-dihydroguanosine 5'-triphosphate to cPMP. In Bos taurus (Bovine), this protein is Molybdenum cofactor biosynthesis protein 1 (MOCS1).